Here is a 94-residue protein sequence, read N- to C-terminus: Venom peptide SjAPI (94 aa).

Positions 1 to 24 are cleaved as a signal peptide; it reads MKWGALLCIFGFLAFCSVLDRGLG. Residues 25-30 constitute a propeptide that is removed on maturation; the sequence is WIPDIW. Disulfide bonds link cysteine 33-cysteine 70, cysteine 43-cysteine 66, cysteine 47-cysteine 62, cysteine 51-cysteine 92, and cysteine 72-cysteine 86. Positions 33 to 92 constitute a TIL domain; the sequence is CSSKNEEFQQCGSSCPETCANHKNPEPKSCAAVCFVGCVCKPGFIRDDLKGSICVKPEDC. The protease binding loop stretch occupies residues 63 to 65; the sequence is AAV.

Belongs to the serine protease inhibitor-like (TIL domain-containing) family. Expressed by the venom gland.

It is found in the secreted. Recombinant protein inhibits both alpha-chymotrypsin (Ki=97.1 nM) and elastase (Ki=3700 nM). The protein is Venom peptide SjAPI of Scorpiops jendeki (Scorpion).